The chain runs to 383 residues: S-adenosylmethionine synthase (383 aa).

Histidine 15 is a binding site for ATP. Aspartate 17 serves as a coordination point for Mg(2+). Glutamate 43 lines the K(+) pocket. The L-methionine site is built by glutamate 56 and glutamine 99. Positions 99 to 109 (QSPDINQGVDR) are flexible loop. ATP contacts are provided by residues 164 to 166 (DAK), 230 to 231 (RF), aspartate 239, 245 to 246 (RK), alanine 262, and lysine 266. Aspartate 239 contributes to the L-methionine binding site. Lysine 270 serves as a coordination point for L-methionine.

It belongs to the AdoMet synthase family. In terms of assembly, homotetramer; dimer of dimers. Mg(2+) serves as cofactor. K(+) is required as a cofactor.

It is found in the cytoplasm. It carries out the reaction L-methionine + ATP + H2O = S-adenosyl-L-methionine + phosphate + diphosphate. Its pathway is amino-acid biosynthesis; S-adenosyl-L-methionine biosynthesis; S-adenosyl-L-methionine from L-methionine: step 1/1. Its function is as follows. Catalyzes the formation of S-adenosylmethionine (AdoMet) from methionine and ATP. The overall synthetic reaction is composed of two sequential steps, AdoMet formation and the subsequent tripolyphosphate hydrolysis which occurs prior to release of AdoMet from the enzyme. The polypeptide is S-adenosylmethionine synthase (Shewanella sp. (strain W3-18-1)).